Here is a 607-residue protein sequence, read N- to C-terminus: NAD-dependent protein deacetylase sir-2.1 (607 aa).

The tract at residues 1 to 68 is disordered; the sequence is MSRDSGNDSE…SVSSESWQNN (68 aa). Positions 55–64 are enriched in low complexity; the sequence is ESTTSVSSES. One can recognise a Deacetylase sirtuin-type domain in the interval 128 to 401; it reads KLTNYNSLAD…DSIMEQQGKT (274 aa). NAD(+)-binding positions include 153-172 and 237-240; these read GAGVSVSCGIPDFRSKDGIY and QNID. H255 acts as the Proton acceptor in catalysis. Zn(2+)-binding residues include C263, C266, C287, and C290. NAD(+) contacts are provided by residues 327–329, 352–354, and C369; these read GSS and NRE. A disordered region spans residues 426–453; it reads EKRNDDSSDEPTLKKPRMSVADDSMDSE.

This sequence belongs to the sirtuin family. Class I subfamily. As to quaternary structure, interacts with ftt-2 and par-5. Interacts with daf-16 following heat-shock, which causes daf-16 to accumulate in the nucleus. Interaction with daf-16 is promoted by ftt-2. Interacts with transcriptional coregulator hcf-1. Zn(2+) is required as a cofactor.

It localises to the nucleus. Its subcellular location is the cytoplasm. It catalyses the reaction N(6)-acetyl-L-lysyl-[protein] + NAD(+) + H2O = 2''-O-acetyl-ADP-D-ribose + nicotinamide + L-lysyl-[protein]. Functionally, NAD-dependent deacetylase. Involved in metabolism, apoptosis, response to oxidative stress, response to DNA damage, and determination of lifespan. Required for a reduction of the 'Lys-16' acetylation of histone H4 (H4K16ac) on dosage-compensated X chromosomes in hermaphrodites. Plays a role in germ cell and somatic cell apoptosis in response to DNA damage. Functions upstream of daf-16/Forkhead box protein O in the Insulin/IGF-1-like signaling (IIS) mediated pathway, promoting daf-16 mediated transcriptional activation and increased lifespan. May also regulate lifespan independently of daf-16 by modulating the transcription of genes involved in the stress response of the endoplasmic reticulum (ER). Functions upstream of transcriptional coregulator hcf-1, perhaps acting independently of the IIS mediated pathway, to modulate lifespan and oxidative stress response. Acts upstream of the nicotinic acid metabolism pathway, which may be linked to the regulation of longevity. Plays a role in ascaroside-mediated longevity and stress resistance. In Caenorhabditis elegans, this protein is NAD-dependent protein deacetylase sir-2.1.